The chain runs to 208 residues: Ribosomal RNA large subunit methyltransferase E (208 aa).

Gly-61, Trp-63, Asp-81, Asp-97, and Asp-122 together coordinate S-adenosyl-L-methionine. The Proton acceptor role is filled by Lys-162.

This sequence belongs to the class I-like SAM-binding methyltransferase superfamily. RNA methyltransferase RlmE family.

Its subcellular location is the cytoplasm. The catalysed reaction is uridine(2552) in 23S rRNA + S-adenosyl-L-methionine = 2'-O-methyluridine(2552) in 23S rRNA + S-adenosyl-L-homocysteine + H(+). Functionally, specifically methylates the uridine in position 2552 of 23S rRNA at the 2'-O position of the ribose in the fully assembled 50S ribosomal subunit. The polypeptide is Ribosomal RNA large subunit methyltransferase E (Pseudomonas entomophila (strain L48)).